Reading from the N-terminus, the 167-residue chain is Claudin domain-containing protein 2 (167 aa).

Transmembrane regions (helical) follow at residues 13-32, 61-81, 96-116, and 130-150; these read LLNL…NYWT, VSAA…GIGI, TIVL…VYTS, and YFFG…FLLA.

The protein belongs to the PMP-22/EMP/MP20 family.

It localises to the membrane. This Mus musculus (Mouse) protein is Claudin domain-containing protein 2 (Cldnd2).